The sequence spans 637 residues: Protein RRP6-like 1 (637 aa).

Residues 118 to 283 enclose the 3'-5' exonuclease domain; the sequence is VEEVKDLEDL…YIYDVMRMEL (166 aa). The 81-residue stretch at 334–414 folds into the HRDC domain; that stretch reads NAVQLSIVAG…RRSMQNAAAF (81 aa). The span at 553–565 shows a compositional bias: acidic residues; sequence VDDDDDDDDDESY. The tract at residues 553-624 is disordered; that stretch reads VDDDDDDDDD…EDMRRRSEKH (72 aa). Positions 580 to 598 are enriched in polar residues; that stretch reads ETPSKGSPSLTQKPKTCNT. The span at 602–614 shows a compositional bias: acidic residues; sequence VLDDDDDSESRED.

It localises to the nucleus. The protein localises to the nucleoplasm. In terms of biological role, acts as an important epigenetic regulator through multiple silencing mechanisms. Involved in transcriptional gene silencing (TGS). Plays a role for DNA methylation in the RNA-directed DNA methylation (RdDM) pathway. Contributes to the methylation status of the retrotransposon SN1. Required for DNA methylation only at a subset of RdDM target loci. Plays a regulatory role in RdDM through retention of non-coding RNAs (ncRNAs) in normal cells. Helps to retain Pol V-transcribed RNAs in chromatin to enable their scaffold function and is required for genome-wide Pol IV-dependent siRNA (24 nt siRNA) production that may involve retention of Pol IV transcripts. Involved in association with RRP6L2 in the silencing of the solo LTR locus. Controls levels of ncRNAs from the solo LTR locus. Seems to function independently of the RdDM pathway. Functions redundantly with RRP6L2 in the regulation of FLC locus. Participates in the maintenance of trimethylated 'Lys-27' (H3K27me3) at FLC locus via the regulation of antisense long non-coding RNAs (lncRNAs) and the regulation of diverse antisense RNAs derived from the FLC locus. Seems not involved in the exosomal RNA degradation. Can complement the growth defect of a yeast mutant lacking RRP6 exonuclease. This is Protein RRP6-like 1 from Arabidopsis thaliana (Mouse-ear cress).